A 549-amino-acid polypeptide reads, in one-letter code: Oxygen-dependent choline dehydrogenase (549 aa).

Residue 4–33 participates in FAD binding; that stretch reads DFVIIGSGSAGSAMASRLSEDGKHTVIVLE. Histidine 465 serves as the catalytic Proton acceptor.

The protein belongs to the GMC oxidoreductase family. FAD is required as a cofactor.

The enzyme catalyses choline + A = betaine aldehyde + AH2. The catalysed reaction is betaine aldehyde + NAD(+) + H2O = glycine betaine + NADH + 2 H(+). It participates in amine and polyamine biosynthesis; betaine biosynthesis via choline pathway; betaine aldehyde from choline (cytochrome c reductase route): step 1/1. Functionally, involved in the biosynthesis of the osmoprotectant glycine betaine. Catalyzes the oxidation of choline to betaine aldehyde and betaine aldehyde to glycine betaine at the same rate. The chain is Oxygen-dependent choline dehydrogenase from Rhizobium rhizogenes (strain K84 / ATCC BAA-868) (Agrobacterium radiobacter).